Reading from the N-terminus, the 137-residue chain is Large ribosomal subunit protein uL16 (137 aa).

This sequence belongs to the universal ribosomal protein uL16 family. Part of the 50S ribosomal subunit.

Binds 23S rRNA and is also seen to make contacts with the A and possibly P site tRNAs. In Bartonella quintana (strain Toulouse) (Rochalimaea quintana), this protein is Large ribosomal subunit protein uL16.